Consider the following 251-residue polypeptide: MAKSSEFVNEESSEDESSVSSIEDQHSSKEPEQSVESNNHGESNAQEDVAEIAGLEKVQGKPVLTTNDLKKESNVFLVRLPPGMSADQISQLKVGSKPTVELKQENENTYQIREESTSSVRVFLPDEQGSYTSNEIKTGYVITETPKISQNIDTGITIPTQAPLVPQRKNLRQHFRPIGDAVGPESEPEAEPKSGIKEHILQETGDATVEELQNKGKEKQKELKKGKREKKDEEEKPKKKKQKKSSKKEKN.

2 disordered regions span residues 1–66 and 163–251; these read MAKS…VLTT and PLVP…KEKN. Acidic residues predominate over residues 8 to 17; it reads VNEESSEDES. A Phosphoserine modification is found at Ser13. A compositionally biased stretch (basic and acidic residues) spans 23–32; the sequence is EDQHSSKEPE. Positions 34–46 are enriched in polar residues; that stretch reads SVESNNHGESNAQ. 2 stretches are compositionally biased toward basic and acidic residues: residues 190 to 201 and 212 to 237; these read AEPKSGIKEHIL and LQNKGKEKQKELKKGKREKKDEEEKP. Basic residues predominate over residues 238–251; that stretch reads KKKKQKKSSKKEKN.

It belongs to the eukaryotic RPA34 RNA polymerase subunit family. As to quaternary structure, component of the RNA polymerase I (Pol I) complex.

It localises to the nucleus. The protein localises to the nucleolus. DNA-dependent RNA polymerase catalyzes the transcription of DNA into RNA using the four ribonucleoside triphosphates as substrates. Component of RNA polymerase I which synthesizes ribosomal RNA precursors. In Schizosaccharomyces pombe (strain 972 / ATCC 24843) (Fission yeast), this protein is DNA-directed RNA polymerase I subunit rpa34 (rpa34).